The primary structure comprises 411 residues: NADH-quinone oxidoreductase subunit H (411 aa).

9 helical membrane passes run 18 to 38, 84 to 104, 124 to 144, 165 to 185, 198 to 218, 260 to 280, 288 to 308, 321 to 341, and 352 to 372; these read LAKS…AILI, WIYL…FAVI, LPVA…GIVL, VISY…YAGT, TWYI…MVGE, VSAL…PISI, WWPL…FMWL, MALG…IVAI, and APAT…ALLG.

The protein belongs to the complex I subunit 1 family. NDH-1 is composed of 14 different subunits. Subunits NuoA, H, J, K, L, M, N constitute the membrane sector of the complex.

The protein localises to the cell membrane. It carries out the reaction a quinone + NADH + 5 H(+)(in) = a quinol + NAD(+) + 4 H(+)(out). In terms of biological role, NDH-1 shuttles electrons from NADH, via FMN and iron-sulfur (Fe-S) centers, to quinones in the respiratory chain. The immediate electron acceptor for the enzyme in this species is believed to be menaquinone. Couples the redox reaction to proton translocation (for every two electrons transferred, four hydrogen ions are translocated across the cytoplasmic membrane), and thus conserves the redox energy in a proton gradient. This subunit may bind ubiquinone. This chain is NADH-quinone oxidoreductase subunit H, found in Mycolicibacterium vanbaalenii (strain DSM 7251 / JCM 13017 / BCRC 16820 / KCTC 9966 / NRRL B-24157 / PYR-1) (Mycobacterium vanbaalenii).